The following is a 312-amino-acid chain: DNA-directed RNA polymerase subunit alpha (312 aa).

An alpha N-terminal domain (alpha-NTD) region spans residues 1 to 229; the sequence is MLQYQIDRIE…ELFQPLATVT (229 aa). The alpha C-terminal domain (alpha-CTD) stretch occupies residues 246–312; that stretch reads IPLEELNLSV…ISIPQSRTSA (67 aa).

It belongs to the RNA polymerase alpha chain family. In cyanobacteria the RNAP catalytic core is composed of 2 alpha, 1 beta, 1 beta', 1 gamma and 1 omega subunit. When a sigma factor is associated with the core the holoenzyme is formed, which can initiate transcription.

It catalyses the reaction RNA(n) + a ribonucleoside 5'-triphosphate = RNA(n+1) + diphosphate. DNA-dependent RNA polymerase catalyzes the transcription of DNA into RNA using the four ribonucleoside triphosphates as substrates. This chain is DNA-directed RNA polymerase subunit alpha, found in Parasynechococcus marenigrum (strain WH8102).